A 118-amino-acid chain; its full sequence is MITKPDKNKTRQKRHIRVRNKISGTAERPRLNVFRSNKNIYAQVIDDVAGVTLVSASTLDSEVAGDNKTDQAKGVGELIAKRAIEKKITNVVFDRGGYLYHGRVQALAEAAREAGLKF.

This sequence belongs to the universal ribosomal protein uL18 family. Part of the 50S ribosomal subunit; part of the 5S rRNA/L5/L18/L25 subcomplex. Contacts the 5S and 23S rRNAs.

Its function is as follows. This is one of the proteins that bind and probably mediate the attachment of the 5S RNA into the large ribosomal subunit, where it forms part of the central protuberance. In Levilactobacillus brevis (strain ATCC 367 / BCRC 12310 / CIP 105137 / JCM 1170 / LMG 11437 / NCIMB 947 / NCTC 947) (Lactobacillus brevis), this protein is Large ribosomal subunit protein uL18.